A 382-amino-acid chain; its full sequence is Beta-1,4-galactosyltransferase 6 (382 aa).

Over 1 to 14 (MSVLRRMMRVSNRS) the chain is Cytoplasmic. The helical; Signal-anchor for type II membrane protein transmembrane segment at 15-35 (LLAFIFFFSLSSSCLYFIYVA) threads the bilayer. At 36–382 (PGIANTYLFM…MPELAPIEDY (347 aa)) the chain is on the lumenal side. Asparagine 71, asparagine 75, asparagine 83, asparagine 84, asparagine 99, and asparagine 122 each carry an N-linked (GlcNAc...) asparagine glycan. Cysteines 108 and 152 form a disulfide. UDP-alpha-D-galactose is bound by residues 163–167 (PFRNR), 202–204 (FNR), 229–230 (VD), tyrosine 258, and tryptophan 290. An intrachain disulfide couples cysteine 223 to cysteine 242. A Mn(2+)-binding site is contributed by aspartate 230. Residue 292–295 (GEDD) coordinates N-acetyl-D-glucosamine. N-linked (GlcNAc...) asparagine glycosylation occurs at asparagine 307. Histidine 323 is a binding site for Mn(2+). Residue 323-324 (HH) coordinates UDP-alpha-D-galactose. Residue arginine 334 coordinates N-acetyl-D-glucosamine. N-linked (GlcNAc...) asparagine glycosylation is present at asparagine 367.

It belongs to the glycosyltransferase 7 family. Requires Mn(2+) as cofactor. It depends on Mg(2+) as a cofactor. As to expression, high expression in brain and adrenal gland, lower in liver, lung, colon and peripheral white blood cells.

The protein localises to the golgi apparatus. The protein resides in the golgi stack membrane. It carries out the reaction a beta-D-glucosyl-(1&lt;-&gt;1')-N-acylsphing-4-enine + UDP-alpha-D-galactose = a beta-D-Gal-(1-&gt;4)-beta-D-Glc-(1&lt;-&gt;1)-Cer(d18:1(4E)) + UDP + H(+). Its pathway is protein modification; protein glycosylation. The protein operates within sphingolipid metabolism. Inhibited by EDTA. Functionally, catalyzes the synthesis of lactosylceramide (LacCer) via the transfer of galactose from UDP-galactose to glucosylceramide (GlcCer). LacCer is the starting point in the biosynthesis of all gangliosides (membrane-bound glycosphingolipids) which play pivotal roles in the CNS including neuronal maturation and axonal and myelin formation. This chain is Beta-1,4-galactosyltransferase 6, found in Homo sapiens (Human).